An 89-amino-acid polypeptide reads, in one-letter code: MSITAERKTALIAEHARTEGDTGSAEVQVAILSERIANLTEHFKTHKKDNHSRRGLLMMVSQRRSLLDHLKKSDLGRYSALIEKLGLRR.

It belongs to the universal ribosomal protein uS15 family. Part of the 30S ribosomal subunit. Forms a bridge to the 50S subunit in the 70S ribosome, contacting the 23S rRNA.

Its function is as follows. One of the primary rRNA binding proteins, it binds directly to 16S rRNA where it helps nucleate assembly of the platform of the 30S subunit by binding and bridging several RNA helices of the 16S rRNA. In terms of biological role, forms an intersubunit bridge (bridge B4) with the 23S rRNA of the 50S subunit in the ribosome. This Caulobacter sp. (strain K31) protein is Small ribosomal subunit protein uS15.